The chain runs to 254 residues: Proteasome activator complex subunit 3 (254 aa).

Residue Ala2 is modified to N-acetylalanine. Ser17 and Ser24 each carry phosphoserine. Lys195 is modified (N6-acetyllysine; by P300/CBP). Ser247 carries the phosphoserine; by CHEK2 modification.

It belongs to the PA28 family. Homoheptamer; the stability of the heptamer is essential for the specific activation of the trypsine-like subunit and inhibition of the chymotrypsin-like and postglutamyl-preferring (PGPH) subunits of the proteasome. Interacts with p53/TP53 and MDM2. Interacts with MAP3K3. Associates with the proteasome. Interacts with CCAR2. Interacts with PSME3IP1 (via C-terminus); the interaction is direct and promotes the association of PSME3 with the 20S proteasome. Interacts with COIL; the interaction is inhibited by PSME3IP1. As to quaternary structure, (Microbial infection) Interacts with human cytomegalovirus UL27. Phosphorylated by MAP3K3. Phosphorylation at Ser-247 promotes its association with CCAR2. Post-translationally, acetylation at the major site Lys-195 is important for oligomerization and ability to degrade its target substrates. Deacetylated by SIRT1.

The protein localises to the nucleus. The protein resides in the cytoplasm. Subunit of the 11S REG-gamma (also called PA28-gamma) proteasome regulator, a doughnut-shaped homoheptamer which associates with the proteasome. 11S REG-gamma activates the trypsin-like catalytic subunit of the proteasome but inhibits the chymotrypsin-like and postglutamyl-preferring (PGPH) subunits. Facilitates the MDM2-p53/TP53 interaction which promotes ubiquitination- and MDM2-dependent proteasomal degradation of p53/TP53, limiting its accumulation and resulting in inhibited apoptosis after DNA damage. May also be involved in cell cycle regulation. Mediates CCAR2 and CHEK2-dependent SIRT1 inhibition. The protein is Proteasome activator complex subunit 3 (PSME3) of Homo sapiens (Human).